The primary structure comprises 142 residues: MKTYMASASTIERKWYVVDAADYTLGRLASQVAAVLRGKNKPTYTPFLDCGDNVIVINADKVKVTGKKLDQKVYYSHSDYVGGLKETTLKEMMEKKPEKVIELAVKGMLPKGPLGRQMFTKLHVYAGPDHEQAAQKPEVLKF.

Belongs to the universal ribosomal protein uL13 family. As to quaternary structure, part of the 50S ribosomal subunit.

Functionally, this protein is one of the early assembly proteins of the 50S ribosomal subunit, although it is not seen to bind rRNA by itself. It is important during the early stages of 50S assembly. The sequence is that of Large ribosomal subunit protein uL13 from Lachnospira eligens (strain ATCC 27750 / DSM 3376 / VPI C15-48 / C15-B4) (Eubacterium eligens).